Consider the following 344-residue polypeptide: Inositol 2-dehydrogenase/D-chiro-inositol 3-dehydrogenase (344 aa).

The protein belongs to the Gfo/Idh/MocA family. In terms of assembly, homotetramer.

The enzyme catalyses myo-inositol + NAD(+) = scyllo-inosose + NADH + H(+). The catalysed reaction is 1D-chiro-inositol + NAD(+) = scyllo-inosine + NADH + H(+). The protein operates within polyol metabolism; myo-inositol degradation into acetyl-CoA; acetyl-CoA from myo-inositol: step 1/7. Involved in the oxidation of myo-inositol (MI) and D-chiro-inositol (DCI) to 2-keto-myo-inositol (2KMI or 2-inosose) and 1-keto-D-chiro-inositol (1KDCI), respectively. The chain is Inositol 2-dehydrogenase/D-chiro-inositol 3-dehydrogenase from Bacillus licheniformis (strain ATCC 14580 / DSM 13 / JCM 2505 / CCUG 7422 / NBRC 12200 / NCIMB 9375 / NCTC 10341 / NRRL NRS-1264 / Gibson 46).